The primary structure comprises 365 residues: Elongation factor Tu (365 aa).

GTP-binding positions include 1–7 (HVDHGKT), 62–66 (DCPGH), and 117–120 (NKCD). In terms of domain architecture, tr-type G spans 1–185 (HVDHGKTTLT…TLDSYIPTPE (185 aa)). A Mg(2+)-binding site is contributed by Thr7.

It belongs to the TRAFAC class translation factor GTPase superfamily. Classic translation factor GTPase family. EF-Tu/EF-1A subfamily. Monomer.

The protein resides in the cytoplasm. It catalyses the reaction GTP + H2O = GDP + phosphate + H(+). GTP hydrolase that promotes the GTP-dependent binding of aminoacyl-tRNA to the A-site of ribosomes during protein biosynthesis. The polypeptide is Elongation factor Tu (Buchnera aphidicola subsp. Schlechtendalia chinensis).